Here is a 154-residue protein sequence, read N- to C-terminus: Stigma-specific STIG1-like protein 3 (154 aa).

An N-terminal signal peptide occupies residues 1–23 (MGHRNTVLTILLTISIAIMVLIA).

It belongs to the STIG1 family.

This Arabidopsis thaliana (Mouse-ear cress) protein is Stigma-specific STIG1-like protein 3.